We begin with the raw amino-acid sequence, 118 residues long: Small ribosomal subunit protein uS13 (118 aa).

The interval 94–118 is disordered; that stretch reads SLPLRGQRTKTNARTRKGPRKPIKK.

This sequence belongs to the universal ribosomal protein uS13 family. As to quaternary structure, part of the 30S ribosomal subunit. Forms a loose heterodimer with protein S19. Forms two bridges to the 50S subunit in the 70S ribosome.

Its function is as follows. Located at the top of the head of the 30S subunit, it contacts several helices of the 16S rRNA. In the 70S ribosome it contacts the 23S rRNA (bridge B1a) and protein L5 of the 50S subunit (bridge B1b), connecting the 2 subunits; these bridges are implicated in subunit movement. Contacts the tRNAs in the A and P-sites. The protein is Small ribosomal subunit protein uS13 of Alteromonas mediterranea (strain DSM 17117 / CIP 110805 / LMG 28347 / Deep ecotype).